Consider the following 519-residue polypeptide: MSELLDSIQPYLTKWYVVISALLVSFFIAHKISVARFKATHNCAASPEYYKVNWFSLPLLYRLIQVKREGRLLDFAQKIYDDVKALTFVIKIVGVPVIITRDPENMKAVLATQFNDFALGTRHAHFKPLLGDGIFTLDGNGWKQSRSMLRPQFSREQVAHVQALEPHLQRLAKHIRLADGETINIQDLFFKLTVDTATEFLFGQSVYSLKDAAINDPPTEDFDGRSSFANSFNTAQTYLGTRAYLQMFYFIVNNSDFRKCCKQVHDFTRFYVQKGLDMTPEELEKKSENGYVFLYELVKQTRDPKVLQDQLLNILLAGRDTTAGLLSFTFFELARHPRVFNKLKEEIYEAFGKGDDARVSEITFESLKKCEYLKWVMNEMLRLYPSVPVNFRVATKRTTLPRGGGPDGNSPIYVGKGTTVAYSVYSTHRMEEYYGKDADEFKPERWAESRKLGWAYVPFNGGPRICLGQQFALTEASYIVTRLLQMFDKLELHDDRPYPPAKSVHLTMCHQDGVYVSLS.

Position 466 (Cys466) interacts with heme.

The protein belongs to the cytochrome P450 family. Requires heme as cofactor.

It localises to the membrane. In terms of biological role, together with an NADPH cytochrome P450 the enzyme system catalyzes the terminal hydroxylation as the first step in the assimilation of alkanes and fatty acids. This is Cytochrome P450 52A13 (CYP52A13) from Debaryomyces hansenii (Yeast).